Consider the following 308-residue polypeptide: Pantothenate synthetase (308 aa).

39–46 (MGALHDGH) contacts ATP. The active-site Proton donor is the histidine 46. Glutamine 71 is a binding site for (R)-pantoate. Glutamine 71 serves as a coordination point for beta-alanine. 157–160 (GEKD) provides a ligand contact to ATP. Residue glutamine 163 participates in (R)-pantoate binding. ATP is bound by residues valine 186 and 194–197 (MSSR). Residues 286-308 (IETPAGTAGPDGDRQYAQSPWRN) form a disordered region.

This sequence belongs to the pantothenate synthetase family. In terms of assembly, homodimer.

It localises to the cytoplasm. It carries out the reaction (R)-pantoate + beta-alanine + ATP = (R)-pantothenate + AMP + diphosphate + H(+). It participates in cofactor biosynthesis; (R)-pantothenate biosynthesis; (R)-pantothenate from (R)-pantoate and beta-alanine: step 1/1. Its function is as follows. Catalyzes the condensation of pantoate with beta-alanine in an ATP-dependent reaction via a pantoyl-adenylate intermediate. This chain is Pantothenate synthetase, found in Mycobacterium avium (strain 104).